Consider the following 318-residue polypeptide: L-lactate dehydrogenase (318 aa).

NAD(+) is bound by residues valine 18, aspartate 39, lysine 44, tyrosine 69, and 83–84 (GA). Residues glutamine 86 and arginine 92 each coordinate substrate. NAD(+) contacts are provided by residues serine 105, 122-124 (VSN), and serine 147. Residue 124 to 127 (NPVD) participates in substrate binding. 152 to 155 (DTSR) serves as a coordination point for substrate. Histidine 179 serves as the catalytic Proton acceptor. Position 225 is a phosphotyrosine (tyrosine 225). Threonine 234 serves as a coordination point for substrate.

Belongs to the LDH/MDH superfamily. LDH family. In terms of assembly, homotetramer.

The protein resides in the cytoplasm. The catalysed reaction is (S)-lactate + NAD(+) = pyruvate + NADH + H(+). The protein operates within fermentation; pyruvate fermentation to lactate; (S)-lactate from pyruvate: step 1/1. Its function is as follows. Catalyzes the conversion of lactate to pyruvate. This chain is L-lactate dehydrogenase, found in Clostridium botulinum (strain Langeland / NCTC 10281 / Type F).